The sequence spans 418 residues: Lactosylceramide alpha-2,3-sialyltransferase (418 aa).

The interval 1 to 25 (MRTKAAGCAERRPLQPRTEAAAAPA) is disordered. Residues 1 to 61 (MRTKAAGCAE…RAQSKMRRPS (61 aa)) are Cytoplasmic-facing. The helical; Signal-anchor for type II membrane protein transmembrane segment at 62 to 82 (LLLKDILKCTLLVFGVWILYI) threads the bilayer. At 83–418 (LKLNYTTEEC…DLSGGIDREF (336 aa)) the chain is on the lumenal side. Residues Asn86, Asn236, and Asn390 are each glycosylated (N-linked (GlcNAc...) asparagine). Residues Cys195 and Cys353 are joined by a disulfide bond.

It belongs to the glycosyltransferase 29 family. N-glycosylated. As to expression, ubiquitous. High expression in brain, skeletal muscle, placenta, and testis. mRNA widely distributed in human brain, but slightly elevated expression was observed in the cerebral cortex, temporal lobe, and putamen.

It is found in the golgi apparatus membrane. It catalyses the reaction a beta-D-Gal-(1-&gt;4)-beta-D-Glc-(1&lt;-&gt;1)-Cer(d18:1(4E)) + CMP-N-acetyl-beta-neuraminate = a ganglioside GM3 (d18:1(4E)) + CMP + H(+). The enzyme catalyses ganglioside GA2 (d18:1(4E)/18:0) + CMP-N-acetyl-beta-neuraminate = ganglioside GM2 (d18:1(4E)/18:0) + CMP + H(+). The catalysed reaction is a beta-D-Gal-(1&lt;-&gt;1')-ceramide + CMP-N-acetyl-beta-neuraminate = N-acetyl-alpha-neuraminosyl-(2-&gt;3)-beta-D-galactosyl-(1&lt;-&gt;1')-ceramide + CMP + H(+). It carries out the reaction a beta-D-galactosyl-(1&lt;-&gt;1')-N-acylsphing-4-enine + CMP-N-acetyl-beta-neuraminate = a ganglioside GM4 (d18:1(4E)) + CMP + H(+). It catalyses the reaction ganglioside GA1 (d18:1(4E)/18:0) + CMP-N-acetyl-beta-neuraminate = ganglioside GM1 (d18:1(4E)/18:0) + CMP + H(+). The protein operates within glycolipid biosynthesis. Functionally, transfers the sialyl group (N-acetyl-alpha-neuraminyl or NeuAc) from CMP-NeuAc to the non-reducing terminal galactose (Gal) of glycosphingolipids forming gangliosides (important molecules involved in the regulation of multiple cellular processes, including cell proliferation and differentiation, apoptosis, embryogenesis, development, and oncogenesis). Mainly involved in the biosynthesis of ganglioside GM3 but can also use different glycolipids as substrate acceptors such as D-galactosylceramide (GalCer), asialo-GM2 (GA2) and asialo-GM1 (GA1), although less preferentially than beta-D-Gal-(1-&gt;4)-beta-D-Glc-(1&lt;-&gt;1)-Cer (LacCer). The polypeptide is Lactosylceramide alpha-2,3-sialyltransferase (ST3GAL5) (Homo sapiens (Human)).